The following is a 294-amino-acid chain: Cuticle collagen 144 (294 aa).

Residues 1–30 (MEKILVTISTGAASFAVLAVLFTIPSLYNT) form the signal peptide. Residues 100–112 (TCPPGPPGPPGQP) show a composition bias toward pro residues. 2 disordered regions span residues 100–134 (TCPP…TYAP) and 148–278 (PQGP…GNDA). Triple-helical region regions lie at residues 102-127 (PPGP…KGED) and 153-274 (GPEG…PGLP). Low complexity-rich tracts occupy residues 164–209 (AGPD…PGQD) and 219–265 (APGA…DGQP).

As to quaternary structure, collagen polypeptide chains are complexed within the cuticle by disulfide bonds and other types of covalent cross-links.

Functionally, nematode cuticles are composed largely of collagen-like proteins. The cuticle functions both as an exoskeleton and as a barrier to protect the worm from its environment. This chain is Cuticle collagen 144, found in Caenorhabditis briggsae.